The following is a 2159-amino-acid chain: Calpain-type cysteine protease DEK1 (2159 aa).

Positions 1 to 33 (MEGEGHHGVVLACSICGFLFAVLSPFSFWVLWA) are cleaved as a signal peptide. The Extracellular segment spans residues 34–70 (VNWRPWRLYSWIYARKWPTYVQGPQLSTLCSLLTLCA). A helical transmembrane segment spans residues 71–91 (WLVVISPIAVLLVWGSVLIAL). Residues 92-95 (MERN) are Cytoplasmic-facing. The helical transmembrane segment at 96–116 (IIGLAVIMAGVALLLSFYSIM) threads the bilayer. The Extracellular portion of the chain corresponds to 117–127 (LWWRTQWQSSE). A helical transmembrane segment spans residues 128 to 148 (AVAYLLLLAVCLLCAYDFCAI). Residues 149–164 (YVTAGASASELNSPSG) are Cytoplasmic-facing. Residues 165 to 185 (FFFGVSVISLAINMLFICKIL) form a helical membrane-spanning segment. Residues 186–236 (FNVSGFDVDEYVRRSYKFAYSDCVEVAPVSCSPEPPDPSELYMTKSSRVKH) lie on the Extracellular side of the membrane. The helical transmembrane segment at 237 to 257 (LGLLYISSLLVLVGYSILYGL) threads the bilayer. The Cytoplasmic segment spans residues 258 to 264 (TSKEARW). Residues 265–285 (LGALTSVAVVILDWNLGLCSF) traverse the membrane as a helical segment. The Extracellular portion of the chain corresponds to 286-294 (RFELLKSRM). A helical transmembrane segment spans residues 295-315 (IVLFVAGTSRAFLVSFGVHYW). The Cytoplasmic segment spans residues 316–320 (YLGHC). A helical membrane pass occupies residues 321–341 (ISYAFVASVLLSAAVSSWLSI). The Extracellular segment spans residues 342–623 (SNPSVARIDA…LIFHHLAGSP (282 aa)). The interval 365-409 (RKGQNSSSNSSEGCGSSVKRSSGSVEAGQNGNAMDSMYRSNSQSD) is disordered. A compositionally biased stretch (low complexity) spans 369–381 (NSSSNSSEGCGSS). Residues 382-409 (VKRSSGSVEAGQNGNAMDSMYRSNSQSD) are compositionally biased toward polar residues. The chain crosses the membrane as a helical span at residues 624–644 (IRAFIVFTVMFIIETATVAIY). Residues 645–660 (RPETIKVINATHEQFE) are Cytoplasmic-facing. The chain crosses the membrane as a helical span at residues 661–681 (FGFSILLLSPVVCSIMAFIWS). Residues 682-694 (LRAEEMLMTSKPQ) are Extracellular-facing. A helical transmembrane segment spans residues 695 to 715 (KYGFIAWLLSTCVGLFLSFLS). The Cytoplasmic segment spans residues 716–719 (KSSV). A helical transmembrane segment spans residues 720–740 (ILGLSLTVPLMVACLSFAVPI). Topologically, residues 741 to 770 (WIRNGYSFWIPGREFANRENVSQAPGEKER) are extracellular. Residues 771 to 791 (ALFVITIAVFTASIIGLGAIV) traverse the membrane as a helical segment. Topologically, residues 792–822 (SAKPLDALGYKGWDADKNSSYSPYATSMYLG) are cytoplasmic. A helical transmembrane segment spans residues 823–843 (WALSSTIAVITTGLIPIVAWF). The Extracellular portion of the chain corresponds to 844–853 (ATYRFSPSSA). Residues 854–874 (ICVGLFATVLVSFCGASYWGV) form a helical membrane-spanning segment. The Cytoplasmic portion of the chain corresponds to 875–887 (VNSREDGVPLKAD). The chain crosses the membrane as a helical span at residues 888 to 908 (FLAALLPLLCIPAFFSLFTGL). Residues 909–921 (YKWKDDDWKISRG) lie on the Extracellular side of the membrane. Residues 922-942 (VYLFVGMGMLLLFGAVAAVIV) traverse the membrane as a helical segment. Topologically, residues 943–946 (TIRP) are cytoplasmic. The chain crosses the membrane as a helical span at residues 947–967 (WTVGVACLVAILFLVFVIGVI). The Extracellular portion of the chain corresponds to 968–981 (HYWTSNNFYLTRTQ). The helical transmembrane segment at 982-1002 (MLLVCSIAFLLALAAFLMGLF) threads the bilayer. Topologically, residues 1003-1016 (HGKPFVGASIGYFS) are cytoplasmic. The chain crosses the membrane as a helical span at residues 1017-1037 (FIFLLTGRALTVLLSPPIVVY). Residues 1038 to 1060 (SPRVLPVYVYDAHADSAKNVSYA) are Extracellular-facing. The chain crosses the membrane as a helical span at residues 1061-1081 (FLILYGIALATEVWGVIASLI). At 1082 to 2159 (MNPPFVGAGV…SKASIRLEAV (1078 aa)) the chain is on the cytoplasmic side. Phosphoserine occurs at positions 1371 and 1376. The Calpain catalytic 1 domain occupies 1417 to 1609 (TGRHCGELDL…MSPAEYGFFD (193 aa)). Ser1665 carries the phosphoserine modification. One can recognise a Calpain catalytic 2 domain in the interval 1703-2005 (NFTDQEFPPE…FRSIYVCRVY (303 aa)). Residues Cys1769, His1927, and Asn1947 contribute to the active site.

The protein belongs to the peptidase C2 family. Autocatalytic proteolytic cleavage leading to the production of mainly cytoplasmic localized subproducts of about 85 and 120 kDa. In terms of tissue distribution, expressed in most tissues at low levels ranging from 30 to 55 ppm. Present in all endosperm cells at transcript level, but confined to aleurones at protein level.

The protein resides in the endoplasmic reticulum membrane. Its subcellular location is the cytoplasm. The protein localises to the cell membrane. It is found in the endosome membrane. Functionally, essential protease involved in epiderm development. Required for aleurone cell development in the endosperm probably by maintaining and restricting the aleurone and embryonic epidermal L1 cell-layer fates as well as meristems organization. Involved in the maintenance of adaxial/abaxial axis information in developing leaves, probably by regulating cell proliferation and expansion. Does not need calcium ions to be active. In Zea mays (Maize), this protein is Calpain-type cysteine protease DEK1 (DEK1).